Here is a 408-residue protein sequence, read N- to C-terminus: Phosphoglycerate kinase (408 aa).

Substrate contacts are provided by residues D24–N26, R39, H62–R65, R121, and R161. ATP is bound by residues K211, G307, E338, and G364 to S367.

The protein belongs to the phosphoglycerate kinase family. Monomer.

It is found in the cytoplasm. The catalysed reaction is (2R)-3-phosphoglycerate + ATP = (2R)-3-phospho-glyceroyl phosphate + ADP. It participates in carbohydrate degradation; glycolysis; pyruvate from D-glyceraldehyde 3-phosphate: step 2/5. The chain is Phosphoglycerate kinase from Paenarthrobacter aurescens (strain TC1).